Here is a 126-residue protein sequence, read N- to C-terminus: MAQLPPEDIATMPAQKVVFNAPFDNKATYYVRIINPGTKRIGFAFKTTKPKRINMNPPNGVLGPKESVNVAISCDAFDPSSEDSKGDRVTVEWCNTPDPAAAAFKLEWFQGDGMVRRKNLPIEYNV.

Position 2 is an N-acetylalanine (A2). The 118-residue stretch at 8–125 (DIATMPAQKV…RRKNLPIEYN (118 aa)) folds into the MSP domain.

Sperm.

The protein resides in the cell projection. The protein localises to the pseudopodium. Its subcellular location is the cytoplasm. It localises to the cytoskeleton. Central component in molecular interactions underlying sperm crawling. Forms an extensive filament system that extends from sperm villipoda, along the leading edge of the pseudopod. This is Major sperm protein 3 (MSP-3) from Globodera rostochiensis (Golden nematode worm).